The following is a 269-amino-acid chain: Polyamine aminopropyltransferase (269 aa).

Positions Met1–Glu226 constitute a PABS domain. An S-methyl-5'-thioadenosine-binding site is contributed by Gln28. His59 and Asp83 together coordinate spermidine. S-methyl-5'-thioadenosine-binding positions include Asp102 and Asp133–Gly134. Catalysis depends on Asp150, which acts as the Proton acceptor. Position 150-153 (Asp150–Asp153) interacts with spermidine.

It belongs to the spermidine/spermine synthase family. As to quaternary structure, homodimer or homotetramer.

It localises to the cytoplasm. It catalyses the reaction S-adenosyl 3-(methylsulfanyl)propylamine + putrescine = S-methyl-5'-thioadenosine + spermidine + H(+). The protein operates within amine and polyamine biosynthesis; spermidine biosynthesis; spermidine from putrescine: step 1/1. Functionally, catalyzes the irreversible transfer of a propylamine group from the amino donor S-adenosylmethioninamine (decarboxy-AdoMet) to putrescine (1,4-diaminobutane) to yield spermidine. The sequence is that of Polyamine aminopropyltransferase from Archaeoglobus fulgidus (strain ATCC 49558 / DSM 4304 / JCM 9628 / NBRC 100126 / VC-16).